The sequence spans 702 residues: Heparin-sulfate lyase (702 aa).

Residues 1–17 (MKNIFFICFCALFAFSG) form the signal peptide. Tyr314 acts as the Proton acceptor in catalysis.

It belongs to the polysaccharide lyase 12 family.

It localises to the periplasm. The enzyme catalyses Elimination of sulfate, appears to act on linkages between N-acetyl-D-glucosamine and uronate. Product is an unsaturated sugar.. Its function is as follows. Specifically cleaves heparan sulfate-rich regions of acidic polysaccharides. Does not act on N,O-desulfated glucosamine or N-acetyl-O-sulfated glucosamine linkages. Functions in cleaving metazoan heparan sulfate and providing carbon, nitrogen and sulfate sources for microorganisms. The sequence is that of Heparin-sulfate lyase (hepC) from Bacteroides thetaiotaomicron (strain ATCC 29148 / DSM 2079 / JCM 5827 / CCUG 10774 / NCTC 10582 / VPI-5482 / E50).